A 137-amino-acid chain; its full sequence is Small ribosomal subunit protein uS12 (137 aa).

D102 carries the post-translational modification 3-methylthioaspartic acid.

The protein belongs to the universal ribosomal protein uS12 family. Part of the 30S ribosomal subunit. Contacts proteins S8 and S17. May interact with IF1 in the 30S initiation complex.

Functionally, with S4 and S5 plays an important role in translational accuracy. In terms of biological role, interacts with and stabilizes bases of the 16S rRNA that are involved in tRNA selection in the A site and with the mRNA backbone. Located at the interface of the 30S and 50S subunits, it traverses the body of the 30S subunit contacting proteins on the other side and probably holding the rRNA structure together. The combined cluster of proteins S8, S12 and S17 appears to hold together the shoulder and platform of the 30S subunit. This chain is Small ribosomal subunit protein uS12, found in Mesoplasma florum (strain ATCC 33453 / NBRC 100688 / NCTC 11704 / L1) (Acholeplasma florum).